A 620-amino-acid chain; its full sequence is Chaperone protein DnaK (620 aa).

The interval 579–620 is disordered; the sequence is KAQKEASAGAEASEDASGPSSTGSASDDDVVDADYEVVDEDK. Low complexity predominate over residues 583-603; it reads EASAGAEASEDASGPSSTGSA. Positions 604-620 are enriched in acidic residues; sequence SDDDVVDADYEVVDEDK.

The protein belongs to the heat shock protein 70 family.

Functionally, acts as a chaperone. This Methanococcoides burtonii (strain DSM 6242 / NBRC 107633 / OCM 468 / ACE-M) protein is Chaperone protein DnaK.